Here is a 75-residue protein sequence, read N- to C-terminus: Notewaprin-b (75 aa).

The signal sequence occupies residues 1–24 (MSSGGLLLLLGLLTLWAELTPVSS). One can recognise a WAP domain in the interval 27-72 (RPKKPGLCPPRPQKPPCVRECKNDWICPGEQKCCRYGCIYECRDPI). Cystine bridges form between Cys34–Cys60, Cys43–Cys64, Cys47–Cys59, and Cys53–Cys68.

It belongs to the venom waprin family. As to expression, expressed by the venom gland.

It localises to the secreted. Its function is as follows. Damages membranes of susceptible bacteria. Has no hemolytic activity. Not toxic to mice. Does not inhibit the proteinases elastase and cathepsin G. The sequence is that of Notewaprin-b from Notechis scutatus scutatus (Mainland tiger snake).